A 644-amino-acid chain; its full sequence is DNA gyrase subunit B (644 aa).

Residues 429–543 (CEIFLVEGDS…AGYVYIAQPP (115 aa)) enclose the Toprim domain. Mg(2+)-binding residues include Glu435, Asp508, and Asp510.

It belongs to the type II topoisomerase GyrB family. As to quaternary structure, heterotetramer, composed of two GyrA and two GyrB chains. In the heterotetramer, GyrA contains the active site tyrosine that forms a transient covalent intermediate with DNA, while GyrB binds cofactors and catalyzes ATP hydrolysis. Mg(2+) is required as a cofactor. It depends on Mn(2+) as a cofactor. Requires Ca(2+) as cofactor.

Its subcellular location is the cytoplasm. The enzyme catalyses ATP-dependent breakage, passage and rejoining of double-stranded DNA.. In terms of biological role, a type II topoisomerase that negatively supercoils closed circular double-stranded (ds) DNA in an ATP-dependent manner to modulate DNA topology and maintain chromosomes in an underwound state. Negative supercoiling favors strand separation, and DNA replication, transcription, recombination and repair, all of which involve strand separation. Also able to catalyze the interconversion of other topological isomers of dsDNA rings, including catenanes and knotted rings. Type II topoisomerases break and join 2 DNA strands simultaneously in an ATP-dependent manner. This Staphylococcus aureus (strain MRSA252) protein is DNA gyrase subunit B.